Here is a 496-residue protein sequence, read N- to C-terminus: Glycerol kinase (496 aa).

Thr-11 lines the ADP pocket. The ATP site is built by Thr-11, Ser-12, and Ser-13. Thr-11 contributes to the sn-glycerol 3-phosphate binding site. An ADP-binding site is contributed by Arg-15. Sn-glycerol 3-phosphate contacts are provided by Arg-81, Glu-82, Tyr-133, and Asp-242. Residues Arg-81, Glu-82, Tyr-133, Asp-242, and Gln-243 each coordinate glycerol. Thr-264 and Gly-307 together coordinate ADP. The ATP site is built by Thr-264, Gly-307, Gln-311, and Gly-412. Gly-412 and Asn-416 together coordinate ADP.

Belongs to the FGGY kinase family.

The enzyme catalyses glycerol + ATP = sn-glycerol 3-phosphate + ADP + H(+). It participates in polyol metabolism; glycerol degradation via glycerol kinase pathway; sn-glycerol 3-phosphate from glycerol: step 1/1. With respect to regulation, inhibited by fructose 1,6-bisphosphate (FBP). Key enzyme in the regulation of glycerol uptake and metabolism. Catalyzes the phosphorylation of glycerol to yield sn-glycerol 3-phosphate. The chain is Glycerol kinase from Albidiferax ferrireducens (strain ATCC BAA-621 / DSM 15236 / T118) (Rhodoferax ferrireducens).